The following is a 446-amino-acid chain: C4-dicarboxylate transport protein (446 aa).

9 helical membrane-spanning segments follow: residues 25–45, 58–78, 93–113, 159–179, 199–219, 236–256, 322–342, 370–390, and 400–420; these read VQVLAAIVAGVLLGHFWPAIG, LVKMIIAPVIFLTVATGIASI, FAYFLFFSTLALIVGLVVANV, ALTEGSILQALFVAILFGLAL, VFFGLVGMLMKFAPIGAFGAM, LLIATFYLTSLFFVIVILGAV, IYMTLAALFIAQAVGVDLSLG, AATLSIVPSVPVAGLALILGI, and LTNFIGNALAAIVVAGWEKGL.

This sequence belongs to the dicarboxylate/amino acid:cation symporter (DAACS) (TC 2.A.23) family.

It is found in the cell inner membrane. Functionally, responsible for the transport of dicarboxylates such as succinate, fumarate, and malate from the periplasm across the membrane. The protein is C4-dicarboxylate transport protein of Sphingopyxis alaskensis (strain DSM 13593 / LMG 18877 / RB2256) (Sphingomonas alaskensis).